The primary structure comprises 22 residues: NADH-ubiquinone oxidoreductase 16 kDa subunit (22 aa).

Complex I is composed of about 45 different subunits.

It localises to the mitochondrion inner membrane. The catalysed reaction is a ubiquinone + NADH + 5 H(+)(in) = a ubiquinol + NAD(+) + 4 H(+)(out). Transfer of electrons from NADH to the respiratory chain. The immediate electron acceptor for the enzyme is believed to be ubiquinone. The protein is NADH-ubiquinone oxidoreductase 16 kDa subunit of Solanum tuberosum (Potato).